A 174-amino-acid polypeptide reads, in one-letter code: MTKLIIMTLCLIMSFIFMQMKHPLSMGLMLLIQTFLTCLITSIYVKTFWFSYVLFLIFLGGMLILFIYVTSLSSNEMFSMSFSLTLISLIIFSIFTIVFFMIDKSLIEQFITNMEMEKLSNMNNLINENILSLNKMYNFPTNLITLLLINYLFLTLLVTVKITKKFYGPLRPMN.

Transmembrane regions (helical) follow at residues 25-45 (SMGL…SIYV), 48-68 (FWFS…LFIY), 82-102 (FSLT…FFMI), and 143-163 (LITL…VKIT).

This sequence belongs to the complex I subunit 6 family.

The protein localises to the mitochondrion membrane. It carries out the reaction a ubiquinone + NADH + 5 H(+)(in) = a ubiquinol + NAD(+) + 4 H(+)(out). Core subunit of the mitochondrial membrane respiratory chain NADH dehydrogenase (Complex I) that is believed to belong to the minimal assembly required for catalysis. Complex I functions in the transfer of electrons from NADH to the respiratory chain. The immediate electron acceptor for the enzyme is believed to be ubiquinone. The sequence is that of NADH-ubiquinone oxidoreductase chain 6 (ND6) from Anopheles albimanus (New world malaria mosquito).